The chain runs to 396 residues: ATP-dependent RNA helicase eIF4A (396 aa).

Positions Met-1–Glu-20 are disordered. Residues Asp-23 to Gln-51 carry the Q motif motif. Residues Ile-54–Ile-224 enclose the Helicase ATP-binding domain. Ala-67–Thr-74 contacts ATP. A DEAD box motif is present at residues Asp-172–Asp-175. The region spanning Gly-235–Ile-396 is the Helicase C-terminal domain.

This sequence belongs to the DEAD box helicase family. eIF4A subfamily. Component of the eIF4F complex, which composition varies with external and internal environmental conditions. It is composed of at least eIF4A, eIF4E and eIF4G.

It localises to the cytoplasm. It catalyses the reaction ATP + H2O = ADP + phosphate + H(+). In terms of biological role, ATP-dependent RNA helicase which is a subunit of the eIF4F complex involved in cap recognition and is required for mRNA binding to ribosome. In the current model of translation initiation, eIF4A unwinds RNA secondary structures in the 5'-UTR of mRNAs which is necessary to allow efficient binding of the small ribosomal subunit, and subsequent scanning for the initiator codon. In Phaeosphaeria nodorum (strain SN15 / ATCC MYA-4574 / FGSC 10173) (Glume blotch fungus), this protein is ATP-dependent RNA helicase eIF4A (TIF1).